A 355-amino-acid polypeptide reads, in one-letter code: S-adenosylmethionine:tRNA ribosyltransferase-isomerase (355 aa).

Belongs to the QueA family. As to quaternary structure, monomer.

Its subcellular location is the cytoplasm. The catalysed reaction is 7-aminomethyl-7-carbaguanosine(34) in tRNA + S-adenosyl-L-methionine = epoxyqueuosine(34) in tRNA + adenine + L-methionine + 2 H(+). It participates in tRNA modification; tRNA-queuosine biosynthesis. Its function is as follows. Transfers and isomerizes the ribose moiety from AdoMet to the 7-aminomethyl group of 7-deazaguanine (preQ1-tRNA) to give epoxyqueuosine (oQ-tRNA). The polypeptide is S-adenosylmethionine:tRNA ribosyltransferase-isomerase (Erwinia tasmaniensis (strain DSM 17950 / CFBP 7177 / CIP 109463 / NCPPB 4357 / Et1/99)).